The chain runs to 338 residues: DNA-directed RNA polymerase subunit alpha (338 aa).

An alpha N-terminal domain (alpha-NTD) region spans residues 1–234 (MIQKNWQELI…DQLQLFINFE (234 aa)). An alpha C-terminal domain (alpha-CTD) region spans residues 250-338 (FNKNLLRKVD…ELAKKLEEPY (89 aa)).

This sequence belongs to the RNA polymerase alpha chain family. Homodimer. The RNAP catalytic core consists of 2 alpha, 1 beta, 1 beta' and 1 omega subunit. When a sigma factor is associated with the core the holoenzyme is formed, which can initiate transcription.

It carries out the reaction RNA(n) + a ribonucleoside 5'-triphosphate = RNA(n+1) + diphosphate. Its function is as follows. DNA-dependent RNA polymerase catalyzes the transcription of DNA into RNA using the four ribonucleoside triphosphates as substrates. The sequence is that of DNA-directed RNA polymerase subunit alpha from Paramagnetospirillum magneticum (strain ATCC 700264 / AMB-1) (Magnetospirillum magneticum).